The primary structure comprises 91 residues: Salivary lectin pathway inhibitor (91 aa).

Positions Met-1–Ala-21 are cleaved as a signal peptide. Residues Asn-26 and Asn-87 are each glycosylated (N-linked (GlcNAc...) asparagine).

Belongs to the salp14 family. Post-translationally, glycosylated; deglycosylation largely abrogates the complement inhibitory effect. As to expression, nymph salivary gland (at protein level). Saliva (at protein level). Not detected in midgut.

It is found in the secreted. Its function is as follows. Inhibits the lectin pathway of complement system activation in the host by reducing binding of mannose-binding lectin and L-ficolin to their ligands. Does not affect the classical and alternative pathways of complement system activation in the host. (Microbial infection) Protects Borrelia garinii (strain A87S) from host complement-mediated killing by preventing deposition of host C5b-9 membrane attack complexes on the surface of spirochetes. Inhibits phagocytosis of B.garinii (strain A87S) by human neutrophils. Impairs Borrelia-induced complement-mediated chemotaxis of human polymorphonuclear leukocytes. Functionally, (Microbial infection) Protects Borrelia burgdorferi (strain N40), which is resistant to normal human serum, from Borrelia-opsonizing antibody-mediated complement-dependent killing. The polypeptide is Salivary lectin pathway inhibitor (Ixodes scapularis (Black-legged tick)).